Here is a 100-residue protein sequence, read N- to C-terminus: Small ribosomal subunit protein uS14c (100 aa).

Belongs to the universal ribosomal protein uS14 family. Part of the 30S ribosomal subunit.

It localises to the plastid. Its function is as follows. Binds 16S rRNA, required for the assembly of 30S particles. The chain is Small ribosomal subunit protein uS14c from Cuscuta obtusiflora (Peruvian dodder).